The primary structure comprises 245 residues: 1-(5-phosphoribosyl)-5-[(5-phosphoribosylamino)methylideneamino] imidazole-4-carboxamide isomerase (245 aa).

Residue aspartate 7 is the Proton acceptor of the active site. Aspartate 129 (proton donor) is an active-site residue.

Belongs to the HisA/HisF family.

It localises to the cytoplasm. The catalysed reaction is 1-(5-phospho-beta-D-ribosyl)-5-[(5-phospho-beta-D-ribosylamino)methylideneamino]imidazole-4-carboxamide = 5-[(5-phospho-1-deoxy-D-ribulos-1-ylimino)methylamino]-1-(5-phospho-beta-D-ribosyl)imidazole-4-carboxamide. Its pathway is amino-acid biosynthesis; L-histidine biosynthesis; L-histidine from 5-phospho-alpha-D-ribose 1-diphosphate: step 4/9. In Shigella flexneri serotype 5b (strain 8401), this protein is 1-(5-phosphoribosyl)-5-[(5-phosphoribosylamino)methylideneamino] imidazole-4-carboxamide isomerase.